The sequence spans 286 residues: Thymidylate synthase (286 aa).

A dUMP-binding site is contributed by 140–141; that stretch reads RR. C161 serves as the catalytic Nucleophile. DUMP contacts are provided by residues 185–188, N196, and 226–228; these read RSND and HIY. D188 is a binding site for (6R)-5,10-methylene-5,6,7,8-tetrahydrofolate. Residue A285 participates in (6R)-5,10-methylene-5,6,7,8-tetrahydrofolate binding.

The protein belongs to the thymidylate synthase family. Bacterial-type ThyA subfamily. As to quaternary structure, homodimer.

Its subcellular location is the cytoplasm. It carries out the reaction dUMP + (6R)-5,10-methylene-5,6,7,8-tetrahydrofolate = 7,8-dihydrofolate + dTMP. It participates in pyrimidine metabolism; dTTP biosynthesis. Functionally, catalyzes the reductive methylation of 2'-deoxyuridine-5'-monophosphate (dUMP) to 2'-deoxythymidine-5'-monophosphate (dTMP) while utilizing 5,10-methylenetetrahydrofolate (mTHF) as the methyl donor and reductant in the reaction, yielding dihydrofolate (DHF) as a by-product. This enzymatic reaction provides an intracellular de novo source of dTMP, an essential precursor for DNA biosynthesis. The protein is Thymidylate synthase of Streptococcus thermophilus (strain CNRZ 1066).